The following is a 327-amino-acid chain: MDTNMEDVGRVPAELTSSNFEPTTIPTLDGWIESLMNCKQLAESDVQRLCEKAREVLQDESNVQPVKCPVTVCGDIHGQFHDLMELFKIGGSCPDTNYLFMGDYVDRGYYSVETVTLLVALKIRYPNRITILRGNHESRQITQVYGFYDECLRKYGNANVWKYFTDLFDYLPLTALIDNQIFCLHGGLSPSIDTLDNIRALDRIQEVPHEGPMCDLLWSDPDDRCGWGISPRGAGYTFGQDISEAFNHNNGLTLIARAHQLVMEGYNWSQDRNVVTIFSAPNYCYRCGNQAAIMEIDEHLKYTFLQFDPCPRAGEPMVSRRTPDYFL.

Residues Asp75, His77, Asp103, and Asn135 each coordinate Mn(2+). Catalysis depends on His136, which acts as the Proton donor. Mn(2+)-binding residues include His185 and His259. Leu327 is subject to Leucine methyl ester.

The protein belongs to the PPP phosphatase family. PP-2A subfamily. It depends on Mn(2+) as a cofactor.

The catalysed reaction is O-phospho-L-seryl-[protein] + H2O = L-seryl-[protein] + phosphate. It carries out the reaction O-phospho-L-threonyl-[protein] + H2O = L-threonyl-[protein] + phosphate. The chain is Serine/threonine-protein phosphatase PP2A catalytic subunit (pph-1) from Neurospora crassa (strain ATCC 24698 / 74-OR23-1A / CBS 708.71 / DSM 1257 / FGSC 987).